Reading from the N-terminus, the 637-residue chain is tRNA 5-methylaminomethyl-2-thiouridine biosynthesis bifunctional protein MnmC (637 aa).

Residues 1–20 form a disordered region; sequence MSERIEWLEDGTAGGSPYSP. The interval 1 to 232 is tRNA (mnm(5)s(2)U34)-methyltransferase; that stretch reads MSERIEWLED…KRDNLQGEYQ (232 aa). The FAD-dependent cmnm(5)s(2)U34 oxidoreductase stretch occupies residues 255-637; it reads IGAGLAGSAV…YATRLQPSGS (383 aa).

The protein in the N-terminal section; belongs to the methyltransferase superfamily. tRNA (mnm(5)s(2)U34)-methyltransferase family. This sequence in the C-terminal section; belongs to the DAO family. FAD is required as a cofactor.

The protein localises to the cytoplasm. The catalysed reaction is 5-aminomethyl-2-thiouridine(34) in tRNA + S-adenosyl-L-methionine = 5-methylaminomethyl-2-thiouridine(34) in tRNA + S-adenosyl-L-homocysteine + H(+). In terms of biological role, catalyzes the last two steps in the biosynthesis of 5-methylaminomethyl-2-thiouridine (mnm(5)s(2)U) at the wobble position (U34) in tRNA. Catalyzes the FAD-dependent demodification of cmnm(5)s(2)U34 to nm(5)s(2)U34, followed by the transfer of a methyl group from S-adenosyl-L-methionine to nm(5)s(2)U34, to form mnm(5)s(2)U34. The polypeptide is tRNA 5-methylaminomethyl-2-thiouridine biosynthesis bifunctional protein MnmC (Polaromonas naphthalenivorans (strain CJ2)).